The following is a 243-amino-acid chain: MRKLVLLRHGQSEWNKENRFTGWTDVDLSVDGVSEAAQAGRILKKNNYTFDAAYTSVLKRAIRTLQIVLYEMDLLWIPVYKSWKLNERHYGALQGLNKDETRDKYGEDQVHLWRRSVEVRPPALEKSDKRYPGNEKKYASLKEEELPVTENLEDTEKRVLQDWRELIAPNIKGGKNIIISAHGNTLRALVKYLDNIPSDGIANLNIPTGTPLVYELDENLEPITRYYLGMDGKIEDDKFPKKV.

Residues 8–15 (RHGQSEWN), 21–22 (TG), Arg-60, 87–90 (ERHY), Lys-98, 114–115 (RR), and 183–184 (GN) contribute to the substrate site. Catalysis depends on His-9, which acts as the Tele-phosphohistidine intermediate. Catalysis depends on Glu-87, which acts as the Proton donor/acceptor.

It belongs to the phosphoglycerate mutase family. BPG-dependent PGAM subfamily.

The enzyme catalyses (2R)-2-phosphoglycerate = (2R)-3-phosphoglycerate. It participates in carbohydrate degradation; glycolysis; pyruvate from D-glyceraldehyde 3-phosphate: step 3/5. Catalyzes the interconversion of 2-phosphoglycerate and 3-phosphoglycerate. This Clostridium acetobutylicum (strain ATCC 824 / DSM 792 / JCM 1419 / IAM 19013 / LMG 5710 / NBRC 13948 / NRRL B-527 / VKM B-1787 / 2291 / W) protein is 2,3-bisphosphoglycerate-dependent phosphoglycerate mutase.